The sequence spans 435 residues: Serine--tRNA ligase (435 aa).

L-serine is bound at residue 234–236 (TAE). 265–267 (RRE) is a binding site for ATP. Glu-288 contacts L-serine. Residue 352–355 (EISS) participates in ATP binding. Residue Ser-388 coordinates L-serine.

This sequence belongs to the class-II aminoacyl-tRNA synthetase family. Type-1 seryl-tRNA synthetase subfamily. As to quaternary structure, homodimer. The tRNA molecule binds across the dimer.

It localises to the cytoplasm. The enzyme catalyses tRNA(Ser) + L-serine + ATP = L-seryl-tRNA(Ser) + AMP + diphosphate + H(+). The catalysed reaction is tRNA(Sec) + L-serine + ATP = L-seryl-tRNA(Sec) + AMP + diphosphate + H(+). It functions in the pathway aminoacyl-tRNA biosynthesis; selenocysteinyl-tRNA(Sec) biosynthesis; L-seryl-tRNA(Sec) from L-serine and tRNA(Sec): step 1/1. Functionally, catalyzes the attachment of serine to tRNA(Ser). Is also able to aminoacylate tRNA(Sec) with serine, to form the misacylated tRNA L-seryl-tRNA(Sec), which will be further converted into selenocysteinyl-tRNA(Sec). The sequence is that of Serine--tRNA ligase from Synechococcus sp. (strain JA-2-3B'a(2-13)) (Cyanobacteria bacterium Yellowstone B-Prime).